A 92-amino-acid chain; its full sequence is Large ribosomal subunit protein eL37 (92 aa).

Positions 19, 22, 34, and 37 each coordinate Zn(2+). Residues 19-37 form a C4-type zinc finger; it reads CRRCGRRSYHIQKSTCANC. Residues 50–92 are disordered; it reads SEKAKRRKTTGSGRTAHLRDVHRRFKNGFQVGTPKGARGPENH.

The protein belongs to the eukaryotic ribosomal protein eL37 family. The cofactor is Zn(2+).

Its function is as follows. Binds to the 23S rRNA. This chain is Large ribosomal subunit protein eL37 (rpl37), found in Emericella nidulans (strain FGSC A4 / ATCC 38163 / CBS 112.46 / NRRL 194 / M139) (Aspergillus nidulans).